The primary structure comprises 339 residues: Ketol-acid reductoisomerase (NADP(+)) (339 aa).

In terms of domain architecture, KARI N-terminal Rossmann spans 1–182; the sequence is MRVYYDSDAD…GGGRAGIIET (182 aa). NADP(+)-binding positions include 24–27, Arg-48, Ser-51, and 83–86; these read YGSQ and DEGQ. The active site involves His-108. Gly-134 is a binding site for NADP(+). Positions 183–328 constitute a KARI C-terminal knotted domain; that stretch reads TFKEECETDL…EKLRAMMPWI (146 aa). Residues Asp-191, Glu-195, Glu-227, and Glu-231 each coordinate Mg(2+). Ser-252 is a substrate binding site.

It belongs to the ketol-acid reductoisomerase family. Mg(2+) is required as a cofactor.

It catalyses the reaction (2R)-2,3-dihydroxy-3-methylbutanoate + NADP(+) = (2S)-2-acetolactate + NADPH + H(+). The catalysed reaction is (2R,3R)-2,3-dihydroxy-3-methylpentanoate + NADP(+) = (S)-2-ethyl-2-hydroxy-3-oxobutanoate + NADPH + H(+). The protein operates within amino-acid biosynthesis; L-isoleucine biosynthesis; L-isoleucine from 2-oxobutanoate: step 2/4. Its pathway is amino-acid biosynthesis; L-valine biosynthesis; L-valine from pyruvate: step 2/4. Involved in the biosynthesis of branched-chain amino acids (BCAA). Catalyzes an alkyl-migration followed by a ketol-acid reduction of (S)-2-acetolactate (S2AL) to yield (R)-2,3-dihydroxy-isovalerate. In the isomerase reaction, S2AL is rearranged via a Mg-dependent methyl migration to produce 3-hydroxy-3-methyl-2-ketobutyrate (HMKB). In the reductase reaction, this 2-ketoacid undergoes a metal-dependent reduction by NADPH to yield (R)-2,3-dihydroxy-isovalerate. The polypeptide is Ketol-acid reductoisomerase (NADP(+)) (Acidiphilium cryptum (strain JF-5)).